The chain runs to 710 residues: Pentatricopeptide repeat-containing protein At5g39680 (710 aa).

Residue serine 2 is modified to N-acetylserine. PPR repeat units lie at residues 35 to 64 (NELL…NQSS), 68 to 98 (DAYQ…MPER), 99 to 133 (NVVS…GESR), 135 to 169 (NEFV…GLIS), 170 to 200 (HEFV…LPYC), 201 to 235 (DLSV…DFVW), 236 to 270 (NNLT…GFNA), 271 to 301 (EVEA…THAQ), 302 to 336 (NIFL…EVPP), 337 to 371 (NEYT…GYRN), 372 to 402 (HVMV…MTFR), 403 to 437 (DIVT…GEIP), 438 to 473 (NRIT…DVQP), and 474 to 504 (DIQH…APIE). Residues 509 to 584 (AWRTLLNACY…EPGVSWIGIR (76 aa)) are type E motif. Positions 585–615 (NQTHVFLAEDNQHPEITLIYAKVKEVMSKIK) are type E(+) motif. Residues 616-710 (PLGYSPDVAG…DGQCSCCDYW (95 aa)) are type DYW motif.

The protein belongs to the PPR family. PCMP-H subfamily.

This Arabidopsis thaliana (Mouse-ear cress) protein is Pentatricopeptide repeat-containing protein At5g39680 (EMB2744).